We begin with the raw amino-acid sequence, 465 residues long: D-ornithine/D-lysine decarboxylase (465 aa).

Residue K80 is modified to N6-(pyridoxal phosphate)lysine. Pyridoxal 5'-phosphate-binding positions include G259 and 307-310; that span reads EPGR. The active-site Proton donor is C387. Y422 serves as a coordination point for pyridoxal 5'-phosphate.

This sequence belongs to the Orn/Lys/Arg decarboxylase class-II family. Homodimer. Pyridoxal 5'-phosphate serves as cofactor.

The enzyme catalyses D-ornithine + H(+) = putrescine + CO2. It catalyses the reaction D-lysine + H(+) = cadaverine + CO2. In terms of biological role, catalyzes the decarboxylation of D-ornithine and D-lysine. Ornithine is likely the physiological substrate. Has no detectable diaminopimelate decarboxylase activity in vitro. The chain is D-ornithine/D-lysine decarboxylase from Salmonella typhimurium (strain LT2 / SGSC1412 / ATCC 700720).